A 186-amino-acid polypeptide reads, in one-letter code: Glutathione S-transferase 1, isoform A (186 aa).

A GST N-terminal domain is found at 1 to 81 (MDFYYLPGSA…YLVEKYCAHD (81 aa)). Glutathione-binding positions include S9, 50–52 (HCI), and 65–67 (ESR). In terms of domain architecture, GST C-terminal spans 92 to 186 (DPRRRAVVHQ…RRCRVRSAAI (95 aa)).

This sequence belongs to the GST superfamily. Theta family. In terms of assembly, homodimer.

The catalysed reaction is RX + glutathione = an S-substituted glutathione + a halide anion + H(+). Its function is as follows. Conjugation of reduced glutathione to a wide number of exogenous and endogenous hydrophobic electrophiles. In Anopheles gambiae (African malaria mosquito), this protein is Glutathione S-transferase 1, isoform A.